Here is a 341-residue protein sequence, read N- to C-terminus: Nicotinate-nucleotide--dimethylbenzimidazole phosphoribosyltransferase (341 aa).

Glu-306 acts as the Proton acceptor in catalysis.

It belongs to the CobT family.

It carries out the reaction 5,6-dimethylbenzimidazole + nicotinate beta-D-ribonucleotide = alpha-ribazole 5'-phosphate + nicotinate + H(+). It participates in nucleoside biosynthesis; alpha-ribazole biosynthesis; alpha-ribazole from 5,6-dimethylbenzimidazole: step 1/2. In terms of biological role, catalyzes the synthesis of alpha-ribazole-5'-phosphate from nicotinate mononucleotide (NAMN) and 5,6-dimethylbenzimidazole (DMB). The polypeptide is Nicotinate-nucleotide--dimethylbenzimidazole phosphoribosyltransferase (Methylocella silvestris (strain DSM 15510 / CIP 108128 / LMG 27833 / NCIMB 13906 / BL2)).